The primary structure comprises 229 residues: Cytosolic-abundant heat soluble protein 107838 (229 aa).

Residues methionine 1–glutamate 29 are disordered. The stretch at leucine 109–arginine 145 forms a coiled coil. 2 CAHS motif regions span residues tyrosine 124–glutamine 142 and glutamine 161–glutamate 179. Residues serine 202–glutamine 218 are compositionally biased toward polar residues. Residues serine 202–glutamine 229 are disordered. Basic and acidic residues predominate over residues lysine 219–glutamine 229.

Belongs to the Cytosolic-abundant heat soluble protein (CAHS) family.

It is found in the cytoplasm. In terms of biological role, CAHS proteins are cytosolic heat soluble proteins that seem to contribute to the anhydrobiosis in tardigrades, but their specific mechanisms are yet to be identified. It is possible that protection during anhydrobiosis might occur via the stabilization of vitrifying small molecules such as sugars, but not via the direct glass transition of CAHS proteins themselves. The polypeptide is Cytosolic-abundant heat soluble protein 107838 (Paramacrobiotus richtersi (Water bear)).